A 642-amino-acid polypeptide reads, in one-letter code: Sec1 family domain-containing protein 1 (642 aa).

An N-acetylalanine modification is found at Ala2. Phosphoserine occurs at positions 37, 303, and 528.

The protein belongs to the STXBP/unc-18/SEC1 family. As to quaternary structure, interacts with STX17. Interacts with STX5A. Interacts with the COG complex via COG4.

The protein resides in the cytoplasm. Its subcellular location is the endoplasmic reticulum membrane. It is found in the golgi apparatus. It localises to the golgi stack membrane. Functionally, plays a role in SNARE-pin assembly and Golgi-to-ER retrograde transport via its interaction with COG4. Involved in vesicular transport between the endoplasmic reticulum and the Golgi. In Homo sapiens (Human), this protein is Sec1 family domain-containing protein 1 (SCFD1).